The following is a 273-amino-acid chain: Protein FAM210A (273 aa).

Residues 94 to 116 (RVLSSSSTSQETPSEKKEETDPL) form a disordered region. A compositionally biased stretch (basic and acidic residues) spans 106 to 116 (PSEKKEETDPL). The DUF1279 domain occupies 118 to 230 (DKSISLYQRF…GYMSTPPPVK (113 aa)). The helical transmembrane segment at 138 to 158 (LIPVHLITSGIWFGTFYYATI) threads the bilayer. Residues 233 to 269 (LQGRMEETKELITEKMEETKDRLTEKLQETKGKVSFK) adopt a coiled-coil conformation.

This sequence belongs to the FAM210 family. As to quaternary structure, interacts with ATAD3A. Expressed in skeletal muscle, heart, brain but not in bone.

Its subcellular location is the membrane. It localises to the mitochondrion. The protein resides in the cytoplasm. Its function is as follows. May play a role in the structure and strength of both muscle and bone. This chain is Protein FAM210A (Fam210a), found in Mus musculus (Mouse).